Reading from the N-terminus, the 240-residue chain is uncharacterized protein (240 aa).

The active-site Proton acceptor is Asp66. Asp129 is an active-site residue. Residue His131 is the Proton acceptor of the active site.

This sequence belongs to the glucosamine/galactosamine-6-phosphate isomerase family.

This is an uncharacterized protein from Escherichia coli (strain K12).